A 98-amino-acid polypeptide reads, in one-letter code: MKKKQIEFENELRSMLATALEKDISQEERNALNIAEKALDNSEYLPKIILNLRKALTPLAINRTLNHDLSELYKFITSSKASNKNLGGGLIMSWGRLF.

Imparts immunity to lactococcin-A to naturally sensitive host strains. The protein is Lactococcin-A immunity protein (lciA) of Lactococcus lactis subsp. cremoris (Streptococcus cremoris).